We begin with the raw amino-acid sequence, 351 residues long: N-acetyl-gamma-glutamyl-phosphate reductase (351 aa).

The active site involves Cys-154.

Belongs to the NAGSA dehydrogenase family. Type 1 subfamily.

It is found in the cytoplasm. The enzyme catalyses N-acetyl-L-glutamate 5-semialdehyde + phosphate + NADP(+) = N-acetyl-L-glutamyl 5-phosphate + NADPH + H(+). It participates in amino-acid biosynthesis; L-arginine biosynthesis; N(2)-acetyl-L-ornithine from L-glutamate: step 3/4. Its function is as follows. Catalyzes the NADPH-dependent reduction of N-acetyl-5-glutamyl phosphate to yield N-acetyl-L-glutamate 5-semialdehyde. In Prochlorococcus marinus (strain MIT 9515), this protein is N-acetyl-gamma-glutamyl-phosphate reductase.